Reading from the N-terminus, the 215-residue chain is MHSSYPTITGLGLVPTVIEQSGRGERAYDIYSRLLRERIVFLVGPVNEQSASVIVAQLLFLESENPDKDISFYINSPGGSVYDGLAIYDTMQFIKPEVSTLCTGFAASMGTFLLTAGQRGKRYALPNARIMIHQPSGGSQGTAADVEIQAKEVLYLRERLNAMMAERTGRSIEEIARDTDRDNFMSAHAAKTYGLVDEVLETRAALGASPHLHDR.

The active-site Nucleophile is Ser-108. His-133 is a catalytic residue.

This sequence belongs to the peptidase S14 family. In terms of assembly, fourteen ClpP subunits assemble into 2 heptameric rings which stack back to back to give a disk-like structure with a central cavity, resembling the structure of eukaryotic proteasomes.

It localises to the cytoplasm. It catalyses the reaction Hydrolysis of proteins to small peptides in the presence of ATP and magnesium. alpha-casein is the usual test substrate. In the absence of ATP, only oligopeptides shorter than five residues are hydrolyzed (such as succinyl-Leu-Tyr-|-NHMec, and Leu-Tyr-Leu-|-Tyr-Trp, in which cleavage of the -Tyr-|-Leu- and -Tyr-|-Trp bonds also occurs).. Cleaves peptides in various proteins in a process that requires ATP hydrolysis. Has a chymotrypsin-like activity. Plays a major role in the degradation of misfolded proteins. The chain is ATP-dependent Clp protease proteolytic subunit 1 from Paraburkholderia xenovorans (strain LB400).